The sequence spans 188 residues: Peptidyl-tRNA hydrolase (188 aa).

F14 is a tRNA binding site. The active-site Proton acceptor is the H19. The tRNA site is built by Y64, N66, and N112.

This sequence belongs to the PTH family. As to quaternary structure, monomer.

It localises to the cytoplasm. It carries out the reaction an N-acyl-L-alpha-aminoacyl-tRNA + H2O = an N-acyl-L-amino acid + a tRNA + H(+). Its function is as follows. Hydrolyzes ribosome-free peptidyl-tRNAs (with 1 or more amino acids incorporated), which drop off the ribosome during protein synthesis, or as a result of ribosome stalling. Catalyzes the release of premature peptidyl moieties from peptidyl-tRNA molecules trapped in stalled 50S ribosomal subunits, and thus maintains levels of free tRNAs and 50S ribosomes. The protein is Peptidyl-tRNA hydrolase of Aster yellows witches'-broom phytoplasma (strain AYWB).